Here is a 298-residue protein sequence, read N- to C-terminus: Chitin deacetylase (298 aa).

Residues 1–16 (MLAPLFAALLAGAATA) form the signal peptide. The region spanning 39–222 (NTFALTFDDG…AIKAKGLTPV (184 aa)) is the NodB homology domain. The active-site Proton acceptor is the Asp46. Asp46 provides a ligand contact to acetate. Asp47, His99, and His103 together coordinate Co(2+). An acetate-binding site is contributed by Tyr140. His196 serves as the catalytic Proton donor. The region spanning 256–298 (DDTCGGSNGYVCQNSQCCSQWGWCGTTSEYCAAGCQAAYGPCT) is the Chitin-binding type-1 domain. Intrachain disulfides connect Cys259–Cys273, Cys267–Cys279, Cys272–Cys286, and Cys290–Cys297.

This sequence belongs to the polysaccharide deacetylase family. Requires Co(2+) as cofactor.

The protein localises to the secreted. It catalyses the reaction [(1-&gt;4)-N-acetyl-beta-D-glucosaminyl](n) + n H2O = chitosan + n acetate. With respect to regulation, inhibited by Fe(2+) and to a lesser extent by Mn(2+). In terms of biological role, hydrolyzes the N-acetamido groups of N-acetyl-D-glucosamine polymers in chitin to form chitosan and acetate. May play a role in evasion of the host immune response; plant chitinases liberate chitin molecules from the fungal cell wall which act as elicitors of the plant immune response, deacetylation of the liberated chitin neutralizes elicitor activity. The polypeptide is Chitin deacetylase (Pestalotiopsis sp).